Consider the following 689-residue polypeptide: Beta-adrenergic receptor kinase 1 (689 aa).

Residues 1 to 190 form an N-terminal region; the sequence is MADLEAVLAD…ELNIHLTMND (190 aa). The region spanning 54-175 is the RGS domain; sequence TFEKIFSQKL…IESDKFTRFC (122 aa). A Protein kinase domain is found at 191–453; sequence FSVHRIIGRG…AQEVKESPFF (263 aa). ATP-binding positions include 197–205 and K220; that span reads IGRGGFGEV. D317 serves as the catalytic Proton acceptor. Residues 454–521 enclose the AGC-kinase C-terminal domain; the sequence is RSLDWQMVFL…TISERWQQEV (68 aa). The region spanning 558 to 652 is the PH domain; sequence DCIVHGYMSK…WKKELRDAYR (95 aa). Residue S670 is modified to Phosphoserine.

Belongs to the protein kinase superfamily. AGC Ser/Thr protein kinase family. GPRK subfamily. As to quaternary structure, interacts with the heterodimer formed by GNB1 and GNG2. Interacts with GIT1. Interacts with, and phosphorylates chemokine-stimulated CCR5. Interacts with ARRB1. Interacts with LPAR1 and LPAR2. Interacts with RALA in response to LPAR1 activation. ADRBK1 and RALA mutually inhibit each other's binding to LPAR1. Interacts with ADRB2.

Its subcellular location is the cytoplasm. It localises to the cell membrane. It is found in the postsynapse. The protein resides in the presynapse. It catalyses the reaction [beta-adrenergic receptor] + ATP = [beta-adrenergic receptor]-phosphate + ADP + H(+). In contrast to other AGC family kinases, the catalytic activity is solely regulated by the binding of substrates and ligands, not by phosphorylation of the kinase domain. Its function is as follows. Specifically phosphorylates the agonist-occupied form of the beta-adrenergic and closely related receptors, probably inducing a desensitization of them. Key regulator of LPAR1 signaling. Competes with RALA for binding to LPAR1 thus affecting the signaling properties of the receptor. Desensitizes LPAR1 and LPAR2 in a phosphorylation-independent manner. Positively regulates ciliary smoothened (SMO)-dependent Hedgehog (Hh) signaling pathway by facilitating the trafficking of SMO into the cilium and the stimulation of SMO activity. Inhibits relaxation of airway smooth muscle in response to blue light. This Mus musculus (Mouse) protein is Beta-adrenergic receptor kinase 1.